A 546-amino-acid polypeptide reads, in one-letter code: Parathyroid hormone 2 receptor (546 aa).

The N-terminal stretch at 1 to 24 (MAWLETFTYICGWLILSSCLLVRA) is a signal peptide. Topologically, residues 27–143 (DSDGTITIEE…GKQEFFESLY (117 aa)) are extracellular. Residues N51, N106, N116, and N121 are each glycosylated (N-linked (GlcNAc...) asparagine). The chain crosses the membrane as a helical span at residues 144–167 (ILYTVGYSISFGSLAVAILIIGYF). Topologically, residues 168-174 (RRLHCTR) are cytoplasmic. The helical transmembrane segment at 175–194 (NYIHLHLFVSFMLRAMSIFV) threads the bilayer. Residues 195 to 235 (KDRVAQAHLGVEALQSLVMQGDLQNFIGGPSVDKSQYVGCK) are Extracellular-facing. Residues 236–258 (IAVVMFIYFLATNYYWILVEGLY) traverse the membrane as a helical segment. Residues 259 to 273 (LHNLIFVSFFSDTKY) lie on the Cytoplasmic side of the membrane. A helical membrane pass occupies residues 274–295 (LWGFISIGWGFPAVFVVAWAVA). The Extracellular segment spans residues 296–313 (RATLADTRCWELSAGDRW). Residues 314 to 334 (IYQAPILAAIGLNFILFLNTV) traverse the membrane as a helical segment. Residues 335 to 361 (RVLATKIWETNAVGHDMRKQYRKLAKS) are Cytoplasmic-facing. Residues 362–380 (TLVLVLVFGVHYIVFVCQP) form a helical membrane-spanning segment. Topologically, residues 381–391 (HSFSGLWWEIR) are extracellular. The chain crosses the membrane as a helical span at residues 392–414 (MHCELFFNSFQGFFVSIVYCYCN). The Cytoplasmic segment spans residues 415–546 (GEVQAEVKKM…EGCKGETHPI (132 aa)). Positions 497 to 546 (SEQDCQTHSPPEETKEGHRRQGDDSPVMESSRPVAFTLDTEGCKGETHPI) are disordered. Basic and acidic residues-rich tracts occupy residues 506-519 (PPEETKEGHRRQGD) and 537-546 (EGCKGETHPI).

It belongs to the G-protein coupled receptor 2 family. In terms of assembly, binds to TIPF39/TIP39.

It localises to the cell membrane. This is a specific receptor for parathyroid hormone. The activity of this receptor is mediated by G proteins which activate adenylyl cyclase. PTH2R may be responsible for PTH effects in a number of physiological systems. It may play a significant role in pancreatic function. PTH2R presence in neurons indicates that it may function as a neurotransmitter receptor. The chain is Parathyroid hormone 2 receptor (Pth2r) from Mus musculus (Mouse).